Consider the following 248-residue polypeptide: Pulmonary surfactant-associated protein A (248 aa).

An N-terminal signal peptide occupies residues 1 to 17; the sequence is MLLCSLTLMLLWMVASG. Positions 28-100 constitute a Collagen-like domain; the sequence is GSPGIPGTPG…PGERGPPGFP (73 aa). Residues 29–103 form a disordered region; sequence SPGIPGTPGS…RGPPGFPAYL (75 aa). Residues 42–51 are compositionally biased toward basic and acidic residues; that stretch reads PGRDGRDGIK. Pro residues predominate over residues 54-65; the sequence is PGPPGPMGPPGG. Residues 69–82 are compositionally biased toward low complexity; sequence LPGRDGMTGAPGLP. Basic and acidic residues predominate over residues 84–93; it reads ERGEKGEPGE. The region spanning 127-247 is the C-type lectin domain; it reads LQGSMLEVGE…CLQYRLAICE (121 aa). Intrachain disulfides connect Cys-155/Cys-246 and Cys-224/Cys-238. Residue Asn-207 is glycosylated (N-linked (GlcNAc...) asparagine). Glu-215, Arg-217, Asn-234, and Asp-235 together coordinate Ca(2+).

This sequence belongs to the SFTPA family. As to quaternary structure, oligomeric complex of 6 set of homotrimers.

It localises to the secreted. Its subcellular location is the extracellular space. It is found in the extracellular matrix. The protein resides in the surface film. In terms of biological role, in presence of calcium ions, it binds to surfactant phospholipids and contributes to lower the surface tension at the air-liquid interface in the alveoli of the mammalian lung and is essential for normal respiration. Enhances the expression of MYO18A/SP-R210 on alveolar macrophages. The polypeptide is Pulmonary surfactant-associated protein A (SFTPA1) (Ovis aries (Sheep)).